The following is a 147-amino-acid chain: Hemoglobin subunit epsilon (147 aa).

The Globin domain maps to His3–His147. Phosphoserine is present on residues Ser14 and Ser51. Positions 64 and 93 each coordinate heme b.

Belongs to the globin family. Heterotetramer of two alpha chains and two epsilon chains in early embryonic hemoglobin Gower-2; two zeta chains and two epsilon chains in early embryonic hemoglobin Gower-1. As to expression, red blood cells.

Its function is as follows. The epsilon chain is a beta-type chain of early mammalian embryonic hemoglobin. The sequence is that of Hemoglobin subunit epsilon (HBE1) from Pongo pygmaeus (Bornean orangutan).